The following is a 521-amino-acid chain: Cytokinin dehydrogenase 9 (521 aa).

A signal peptide spans 1-22 (MRPSLLQYLKLLLLLALGGVTT). N-linked (GlcNAc...) asparagine glycosylation occurs at N57. The FAD-binding PCMH-type domain occupies 59–237 (SSFPPVAVLH…TRARIPLEPA (179 aa)). FAD contacts are provided by A95, G97, and G99. H100 carries the post-translational modification Pros-8alpha-FAD histidine. Positions 101, 105, 161, 166, 172, 176, and 227 each coordinate FAD. N278, N412, and N418 each carry an N-linked (GlcNAc...) asparagine glycan. Y469 is a binding site for FAD. N-linked (GlcNAc...) asparagine glycosylation occurs at N472. FAD is bound at residue Q507.

It belongs to the oxygen-dependent FAD-linked oxidoreductase family. Monomer. FAD is required as a cofactor. As to expression, expressed in inflorescence meristems.

The protein localises to the secreted. It localises to the extracellular space. The protein resides in the cytoplasm. It is found in the cytosol. Its subcellular location is the nucleus. The enzyme catalyses N(6)-dimethylallyladenine + A + H2O = 3-methyl-2-butenal + adenine + AH2. In terms of biological role, catalyzes the oxidation of cytokinins, a family of N(6)-substituted adenine derivatives that are plant hormones, where the substituent is an isopentenyl group. Possesses cytokinin oxidase activity toward trans-zeatin (tZ) and N6-(2-isopentenyl)adenine (2iP) in vitro. Functions as a primary strigolactone-responsive gene to regulate rice tillering, plant height, and panicle size, likely via a secondary response gene, RR5, which encodes a cytokinin-inducible rice type-A response regulator that seems to act as negative regulator of the cytokinin signaling. The polypeptide is Cytokinin dehydrogenase 9 (Oryza sativa subsp. japonica (Rice)).